The sequence spans 398 residues: Dihydrolipoyllysine-residue acetyltransferase component of acetoin cleaving system (398 aa).

Positions 2 to 77 (AVKVVMPKLG…PPGTAICYIG (76 aa)) constitute a Lipoyl-binding domain. Lysine 43 carries the N6-lipoyllysine modification. Positions 118-155 (KISPVARKIAEKAGLDLKQLKGTGPGGRIVKDDVTKAL) constitute a Peripheral subunit-binding (PSBD) domain. Residues histidine 371 and aspartate 375 contribute to the active site.

Belongs to the 2-oxoacid dehydrogenase family. (R)-lipoate is required as a cofactor.

The catalysed reaction is N(6)-[(R)-dihydrolipoyl]-L-lysyl-[protein] + acetyl-CoA = N(6)-[(R)-S(8)-acetyldihydrolipoyl]-L-lysyl-[protein] + CoA. It participates in ketone degradation; acetoin degradation. The sequence is that of Dihydrolipoyllysine-residue acetyltransferase component of acetoin cleaving system (acoC) from Bacillus subtilis (strain 168).